We begin with the raw amino-acid sequence, 67 residues long: Small ribosomal subunit protein eS17 (67 aa).

Belongs to the eukaryotic ribosomal protein eS17 family.

The sequence is that of Small ribosomal subunit protein eS17 from Thermococcus onnurineus (strain NA1).